The primary structure comprises 142 residues: Transcription antitermination protein NusB (142 aa).

Belongs to the NusB family.

Functionally, involved in transcription antitermination. Required for transcription of ribosomal RNA (rRNA) genes. Binds specifically to the boxA antiterminator sequence of the ribosomal RNA (rrn) operons. The polypeptide is Transcription antitermination protein NusB (Streptococcus mutans serotype c (strain ATCC 700610 / UA159)).